The primary structure comprises 428 residues: Probable glucose-6-phosphate isomerase (428 aa).

The active-site Proton donor is the E269. Residues H290 and K401 contribute to the active site.

It belongs to the GPI family.

Its subcellular location is the cytoplasm. The enzyme catalyses alpha-D-glucose 6-phosphate = beta-D-fructose 6-phosphate. The protein operates within carbohydrate biosynthesis; gluconeogenesis. It participates in carbohydrate degradation; glycolysis; D-glyceraldehyde 3-phosphate and glycerone phosphate from D-glucose: step 2/4. Functionally, catalyzes the reversible isomerization of glucose-6-phosphate to fructose-6-phosphate. In Natronomonas pharaonis (strain ATCC 35678 / DSM 2160 / CIP 103997 / JCM 8858 / NBRC 14720 / NCIMB 2260 / Gabara) (Halobacterium pharaonis), this protein is Probable glucose-6-phosphate isomerase.